Consider the following 409-residue polypeptide: Dual-specificity RNA methyltransferase RlmN (409 aa).

Glu-117 functions as the Proton acceptor in the catalytic mechanism. Positions Leu-128–Asp-377 constitute a Radical SAM core domain. Cys-135 and Cys-382 are joined by a disulfide. [4Fe-4S] cluster contacts are provided by Cys-142, Cys-146, and Cys-149. S-adenosyl-L-methionine-binding positions include Gly-205–Glu-206, Ser-237, Ser-259–His-261, and Asn-339. The S-methylcysteine intermediate role is filled by Cys-382.

Belongs to the radical SAM superfamily. RlmN family. Requires [4Fe-4S] cluster as cofactor.

The protein resides in the cytoplasm. The enzyme catalyses adenosine(2503) in 23S rRNA + 2 reduced [2Fe-2S]-[ferredoxin] + 2 S-adenosyl-L-methionine = 2-methyladenosine(2503) in 23S rRNA + 5'-deoxyadenosine + L-methionine + 2 oxidized [2Fe-2S]-[ferredoxin] + S-adenosyl-L-homocysteine. The catalysed reaction is adenosine(37) in tRNA + 2 reduced [2Fe-2S]-[ferredoxin] + 2 S-adenosyl-L-methionine = 2-methyladenosine(37) in tRNA + 5'-deoxyadenosine + L-methionine + 2 oxidized [2Fe-2S]-[ferredoxin] + S-adenosyl-L-homocysteine. Specifically methylates position 2 of adenine 2503 in 23S rRNA and position 2 of adenine 37 in tRNAs. m2A2503 modification seems to play a crucial role in the proofreading step occurring at the peptidyl transferase center and thus would serve to optimize ribosomal fidelity. The chain is Dual-specificity RNA methyltransferase RlmN from Psychrobacter arcticus (strain DSM 17307 / VKM B-2377 / 273-4).